We begin with the raw amino-acid sequence, 220 residues long: MGATARSLRLALGLLLLGTLPRGADACSCSPVHPQQAFCNADVVIRAKAVSEKEVDSGNDIYGNPIKRIQYEIKQIKMFKGPEKDIEFIYTAPSSAVCGVSLDVGGKKEYLIAGKAEGDGKMHITLCDFIVPWDTLSTTQKKSLNHRYQMGCECKITRCPMIPCYISSPDECLWMDWVTEKSINGHQAKFFACIKRSDGSCAWYRGAAPPKQEFLDIEDP.

Positions 1 to 26 (MGATARSLRLALGLLLLGTLPRGADA) are cleaved as a signal peptide. Cysteine 27 is a binding site for Zn(2+). Involved in metalloproteinase-binding stretches follow at residues 27–30 (CSCS) and 95–96 (SA). 6 disulfides stabilise this stretch: cysteine 27–cysteine 98, cysteine 29–cysteine 127, cysteine 39–cysteine 152, cysteine 154–cysteine 201, cysteine 159–cysteine 164, and cysteine 172–cysteine 193. Residues 27–152 (CSCSPVHPQQ…SLNHRYQMGC (126 aa)) enclose the NTR domain.

Belongs to the protease inhibitor I35 (TIMP) family. Interacts (via the C-terminal) with MMP2 (via the C-terminal PEX domain); the interaction inhibits the MMP2 activity. In terms of processing, the activity of TIMP2 is dependent on the presence of disulfide bonds. In terms of tissue distribution, predominantly expressed in the lung in alveolar macrophages and epithelial cells. Also found in brain, kidney, intestine, spleen and heart.

The protein resides in the secreted. Functionally, complexes with metalloproteinases (such as collagenases) and irreversibly inactivates them by binding to their catalytic zinc cofactor. The protein is Metalloproteinase inhibitor 2 (TIMP2) of Cavia porcellus (Guinea pig).